A 336-amino-acid polypeptide reads, in one-letter code: Uroporphyrinogen decarboxylase (336 aa).

Substrate-binding positions include 24-28, Asp73, Tyr142, Ser197, and His312; that span reads RQVGR.

It belongs to the uroporphyrinogen decarboxylase family. As to quaternary structure, homodimer.

The protein localises to the cytoplasm. The catalysed reaction is uroporphyrinogen III + 4 H(+) = coproporphyrinogen III + 4 CO2. It participates in porphyrin-containing compound metabolism; protoporphyrin-IX biosynthesis; coproporphyrinogen-III from 5-aminolevulinate: step 4/4. In terms of biological role, catalyzes the decarboxylation of four acetate groups of uroporphyrinogen-III to yield coproporphyrinogen-III. This Chlamydia trachomatis serovar L2 (strain ATCC VR-902B / DSM 19102 / 434/Bu) protein is Uroporphyrinogen decarboxylase.